The sequence spans 333 residues: Phosphate acyltransferase (333 aa).

This sequence belongs to the PlsX family. As to quaternary structure, homodimer. Probably interacts with PlsY.

It localises to the cytoplasm. The enzyme catalyses a fatty acyl-[ACP] + phosphate = an acyl phosphate + holo-[ACP]. Its pathway is lipid metabolism; phospholipid metabolism. Catalyzes the reversible formation of acyl-phosphate (acyl-PO(4)) from acyl-[acyl-carrier-protein] (acyl-ACP). This enzyme utilizes acyl-ACP as fatty acyl donor, but not acyl-CoA. The chain is Phosphate acyltransferase from Helicobacter hepaticus (strain ATCC 51449 / 3B1).